A 932-amino-acid chain; its full sequence is Transcriptional regulatory protein DagR (932 aa).

Residues 111–343 (LIGYDRSLRD…LKSDIQFLCA (233 aa)) form the Sigma-54 factor interaction domain. ATP contacts are provided by residues 141–148 (GPSGVGKT) and 210–219 (ADGGYLLLDE). The region spanning 462 to 567 (RYGDQIEERV…KECRHYRQRI (106 aa)) is the PRD 1 domain. The residue at position 497 (His497) is a Phosphohistidine. Residues 572 to 708 (DCGVILIAHG…PQQENGGKVL (137 aa)) enclose the PTS EIIA type-4 domain. The Tele-phosphohistidine intermediate role is filled by His580. Positions 835–932 (LNPQRILKEM…YFYIYELLYS (98 aa)) constitute a PRD 2 domain. His870 bears the Phosphohistidine mark.

In terms of biological role, involved in the regulation of the catabolism of D-glucosaminate. The protein is Transcriptional regulatory protein DagR (dgaR) of Salmonella typhimurium (strain 14028s / SGSC 2262).